A 374-amino-acid chain; its full sequence is RNA polymerase sigma factor SigA (374 aa).

Residues 141–211 are sigma-70 factor domain-2; it reads LAEANLRLVV…TRAIADQART (71 aa). The short motif at 165–168 is the Interaction with polymerase core subunit RpoC element; that stretch reads DLIQ. The tract at residues 220–296 is sigma-70 factor domain-3; the sequence is ETINKLIRVQ…DQDATSPSDH (77 aa). Residues 309–362 are sigma-70 factor domain-4; the sequence is VLDTLTDREENVLRLRFGLDDGRTRTLEEVGRVFGVTRERIRQIEAKALRKLRH. The segment at residues 335-354 is a DNA-binding region (H-T-H motif); sequence LEEVGRVFGVTRERIRQIEA.

This sequence belongs to the sigma-70 factor family. RpoD/SigA subfamily. In terms of assembly, interacts transiently with the RNA polymerase catalytic core.

The protein resides in the cytoplasm. Its function is as follows. Sigma factors are initiation factors that promote the attachment of RNA polymerase to specific initiation sites and are then released. This sigma factor is the primary sigma factor during exponential growth. The polypeptide is RNA polymerase sigma factor SigA (Listeria monocytogenes serovar 1/2a (strain ATCC BAA-679 / EGD-e)).